Here is a 258-residue protein sequence, read N- to C-terminus: UPF0246 protein ABO_1338 (258 aa).

Belongs to the UPF0246 family.

The polypeptide is UPF0246 protein ABO_1338 (Alcanivorax borkumensis (strain ATCC 700651 / DSM 11573 / NCIMB 13689 / SK2)).